Here is an 875-residue protein sequence, read N- to C-terminus: Lysine-specific demethylase JMJ26 (875 aa).

A disordered region spans residues 31–103 (KPVEATSLSS…RSSVKKRATT (73 aa)). Residues 62–69 (RKRSKADE) carry the Nuclear localization signal motif. A compositionally biased stretch (basic and acidic residues) spans 79–93 (KCDDENKCEENEKKQ). Cys193, Cys196, Cys207, Cys210, Cys216, Cys219, Cys236, Cys239, Cys322, Cys325, Cys339, and Cys347 together coordinate Zn(2+). The RING-type; degenerate zinc finger occupies 193 to 240 (CHQCSKGERRYLFICTFCEVRLYCFPCIKKWYPHLSTDDILEKCPFCR). Residues 317–347 (EERVFCNHCATSIVDLHRSCPKCSYELCLNC) form a B box-type; degenerate zinc finger. Residues 614–837 (PRSGILNIAT…ECLRLTDEFR (224 aa)) form the JmjC domain. 3 residues coordinate Fe cation: His658, Asp660, and His805.

This sequence belongs to the JARID1 histone demethylase family. Fe(2+) is required as a cofactor. As to expression, expressed in inflorescences, roots, siliques, leaves and stems.

It localises to the nucleus. In terms of biological role, may function as histone H3 lysine demethylase and be involved in regulation of gene expression. The polypeptide is Lysine-specific demethylase JMJ26 (Arabidopsis thaliana (Mouse-ear cress)).